Here is a 386-residue protein sequence, read N- to C-terminus: Chaperone protein DnaJ (386 aa).

Residues 4–68 (NFYDVLGVSR…QKRQQYDQLG (65 aa)) form the J domain. Basic and acidic residues-rich tracts occupy residues 22 to 35 (KAYR…HPDV) and 43 to 79 (ERFK…DKRG). Positions 22–132 (KAYRKQAAEH…GGNRPRQGQD (111 aa)) are disordered. 2 stretches are compositionally biased toward gly residues: residues 80–104 (ATGG…GAGG) and 113–125 (FGGG…GGGN). The segment at 147-229 (GATKEVTLTR…CGGDGVVREE (83 aa)) adopts a CR-type zinc-finger fold. Residues Cys-160, Cys-163, Cys-177, Cys-180, Cys-203, Cys-206, Cys-217, and Cys-220 each coordinate Zn(2+). CXXCXGXG motif repeat units follow at residues 160–167 (CDTCDGAG), 177–184 (CSQCNGRG), 203–210 (CPRCEGSG), and 217–224 (CADCGGDG).

This sequence belongs to the DnaJ family. In terms of assembly, homodimer. It depends on Zn(2+) as a cofactor.

It localises to the cytoplasm. Its function is as follows. Participates actively in the response to hyperosmotic and heat shock by preventing the aggregation of stress-denatured proteins and by disaggregating proteins, also in an autonomous, DnaK-independent fashion. Unfolded proteins bind initially to DnaJ; upon interaction with the DnaJ-bound protein, DnaK hydrolyzes its bound ATP, resulting in the formation of a stable complex. GrpE releases ADP from DnaK; ATP binding to DnaK triggers the release of the substrate protein, thus completing the reaction cycle. Several rounds of ATP-dependent interactions between DnaJ, DnaK and GrpE are required for fully efficient folding. Also involved, together with DnaK and GrpE, in the DNA replication of plasmids through activation of initiation proteins. This Halorubrum lacusprofundi (strain ATCC 49239 / DSM 5036 / JCM 8891 / ACAM 34) protein is Chaperone protein DnaJ.